The following is a 367-amino-acid chain: Prenyltransferase idtC (367 aa).

The signal sequence occupies residues 1–22 (MTTLAWFAGRSMVLDLAALTSA). Residues 32–42 (TSTPTSTPTST) are compositionally biased toward low complexity. The tract at residues 32–84 (TSTPTSTPTSTDKAGTPPGSTIHHYGYPQGSVTKPNNSKTEKENGSPKDSKGN) is disordered. N67 carries N-linked (GlcNAc...) asparagine glycosylation. Residues 70–82 (KTEKENGSPKDSK) are compositionally biased toward basic and acidic residues. H132 is a substrate binding site. Positions 139 and 143 each coordinate Mg(2+). Position 148 (R148) interacts with substrate. A glycan (N-linked (GlcNAc...) asparagine) is linked at N150. Residues K233, T234, Q264, N271, and K281 each coordinate substrate.

It belongs to the FPP/GGPP synthase family. Mg(2+) serves as cofactor.

It participates in secondary metabolite biosynthesis. Its function is as follows. Prenyltransferase; part of the gene cluster that mediates the biosynthesis of paspalitrems, indole-diterpene (IDT) mycotoxins that are potent tremorgens in mammals. The geranylgeranyl diphosphate (GGPP) synthase idtG is proposed to catalyze the first step in IDT biosynthesis via catalysis of a series of iterative condensations of isopentenyl diphosphate (IPP) with dimethylallyl diphosphate (DMAPP), geranyl diphosphate (GPP), and farnesyl diphosphate (FPP), to form GGPP. Condensation of indole-3-glycerol phosphate with GGPP by the prenyltransferase idtC then forms 3-geranylgeranylindole (3-GGI). Epoxidation of the two terminal alkenes of the geranylgeranyl moiety by the FAD-dependent monooxygenase idtM, and cyclization by the terpene cyclase idtB then leads to the production of paspaline. The cytochrome P450 monooxygenase idtP then catalyzes oxidative elimination of the pendant methyl group at C-12 of paspaline and generates the C-10 ketone to yield 13-desoxypaxilline. The cytochrome P450 monooxygenase idtQ may catalyze the C-13 oxidation of 13-desoxypaxilline to afford paxilline. Considering that both paspalicine and paxilline were detected in C.paspali, idtQ also catalyzes the formation of paspalinine from 13-desoxypaxilline via paspalicine as an intermediate. Finally, the alpha-prenyltransferase idtF prenylates paspalinine at the C-20 or the C-21 positions to yield paspalitrems A and C, respectively. The hydroxylation of paspalitrem A at C-32 by a still unknown oxidase affords paspalitrem B. This is Prenyltransferase idtC from Claviceps paspali (Rye ergot fungus).